Reading from the N-terminus, the 389-residue chain is Cellobiose 2-epimerase (389 aa).

It belongs to the cellobiose 2-epimerase family. In terms of assembly, monomer.

It catalyses the reaction D-cellobiose = beta-D-glucosyl-(1-&gt;4)-D-mannopyranose. In terms of biological role, catalyzes the reversible epimerization of cellobiose to 4-O-beta-D-glucopyranosyl-D-mannose (Glc-Man). Catalyzes epimerization but also isomerization for beta-1,4- and alpha-1,4-gluco-oligosaccharides. Can use cellobiose, lactose, cellotriose, maltose and maltotriose. In Dictyoglomus turgidum (strain DSM 6724 / Z-1310), this protein is Cellobiose 2-epimerase.